The chain runs to 281 residues: NAD kinase (281 aa).

Aspartate 61 functions as the Proton acceptor in the catalytic mechanism. Residues 61–62 (DG), 134–135 (ND), arginine 145, aspartate 164, 175–180 (TAYSLS), and glutamine 234 contribute to the NAD(+) site.

The protein belongs to the NAD kinase family. The cofactor is a divalent metal cation.

It localises to the cytoplasm. The enzyme catalyses NAD(+) + ATP = ADP + NADP(+) + H(+). In terms of biological role, involved in the regulation of the intracellular balance of NAD and NADP, and is a key enzyme in the biosynthesis of NADP. Catalyzes specifically the phosphorylation on 2'-hydroxyl of the adenosine moiety of NAD to yield NADP. This chain is NAD kinase, found in Clostridium botulinum (strain 657 / Type Ba4).